The primary structure comprises 360 residues: Replication-associated protein (360 aa).

The region spanning 11–114 (SHRNANTFLT…PLAVFERGTF (104 aa)) is the CRESS-DNA virus Rep endonuclease domain. Residues 18–21 (FLTY) carry the RCR-1 motif. Residues Glu52, His60, and His62 each coordinate a divalent metal cation. The RCR-2 motif lies at 60–62 (HLH). Tyr100 acts as the For DNA cleavage activity in catalysis. The RCR-3 signature appears at 100 to 103 (YILK). Glu104 contacts a divalent metal cation. Positions 175 to 187 (SANKLFPEIQEEF) are oligomerization. Position 229–236 (229–236 (GPTRTGKS)) interacts with ATP. Positions 252–270 (VDWSSYNEDAIYNIVDDIP) are transactivation. A Nuclear localization signal motif is present at residues 292-303 (KYGKKKKVQKKS).

It belongs to the geminiviridae Rep protein family. In terms of assembly, homooligomer. Rep binds to repeated DNA motifs (iterons). Forms the O-complex, which is a Rep-DNA complex involved in the initiation of RCR. Part of the C- and V-complexes which are RepA-Rep-DNA complexes involved in the c-sense and v-sense transcription. It depends on Mg(2+) as a cofactor. Requires Mn(2+) as cofactor.

It is found in the host nucleus. In terms of biological role, essential for the replication of viral ssDNA. The closed circular ssDNA genome is first converted to a superhelical dsDNA. Rep binds a specific region at the genome origin of replication. It introduces an endonucleolytic nick within the conserved sequence 5'-TAATATTAC-3' in the intergenic region of the genome present in all geminiviruses, thereby initiating the rolling circle replication (RCR). Following cleavage, binds covalently to the 5'-phosphate of DNA as a tyrosyl ester. The cleavage gives rise to a free 3'-OH that serves as a primer for the cellular DNA polymerase. The polymerase synthesizes the (+) strand DNA by rolling circle mechanism. After one round of replication, a Rep-catalyzed nucleotidyl transfer reaction releases a circular single-stranded virus genome, thereby terminating the replication. Displays origin-specific DNA cleavage, nucleotidyl transferase, ATPase and helicase activities. Acts as an inhibitor of C-sense gene transcription. The protein is Replication-associated protein of Maize streak virus genotype A (isolate Nigeria) (MSV).